The sequence spans 877 residues: MQAQAIRQAFLEYFVEQGHQIVPSSPLIPRNDPTLLFTNAGMVPFKDVFLGLETRPYRRAVSSQRCMRAGGKHNDLENVGYTARHHTFFEMLGNFSFGDYFKREVIGFAWRFLTERLGLPPEKLWITVYEEDDEAADIWMNEIGVDPARLSRCGEKDNFWSMGDTGPCGPCSEIFYDHGPHIPGGPPGSPEEDGDRYIEIWNLVFMQFDRDSSGTLTPLPKPSVDTGMGLERLAAVLQGVHNNYDTDLFKPLIAAAAAISGKTYGSDAATDISLRVLADHIRACSFLITDGVLPANEGRGYVLRRIIRRAVRHGRKLGMETVFFHQLVAPLVAEMGSAFPELTRAQREVERALEREETRFRETLERGLSLLEEAIADLAAGAAIPGEIIFRLADTFGFPVDLTADIARERDLIMDMEGYEAAMADERSPLPCRLGGSGEVKTERVYHDLAMRLPVTEFTGYSTCADEGKVVALIRDGEEVAFLEAGDMGVVILDRTPFYGESGGQAGDRGELQSNDALFAVTDTQKPMGHLHVHLGRVESGRLQIGDMVVASVDEVARRATAAHHSATHLLHAALRNILGSHVQQKGSLVNPERLRFDFSHPEPVTAAQLREIERVVNAAIRNNVGAETRILPVAEAQALGAMALFGEKYGDEVRVVRMGDFSMELCGGTHVEALGDIGVFKILSESGVAAGIRRIEAVTGAVALEAIQRDEERLQAAAGLLKVAPAELDQRLAQTLERLRQLEKELEKVKRDEAVRAGAGLAAEAEDVGGVPVLIRRLEGMDGKALRDALDRLRSQLPDGVIVLAGVEREKVALIAGVGKGLTGRVHAGELVNTVAQPLGGKGGGRPELAQAGAGNPAALDAALNAARDWVKGKLG.

4 residues coordinate Zn(2+): H565, H569, C667, and H671.

This sequence belongs to the class-II aminoacyl-tRNA synthetase family. Zn(2+) is required as a cofactor.

Its subcellular location is the cytoplasm. It carries out the reaction tRNA(Ala) + L-alanine + ATP = L-alanyl-tRNA(Ala) + AMP + diphosphate. Its function is as follows. Catalyzes the attachment of alanine to tRNA(Ala) in a two-step reaction: alanine is first activated by ATP to form Ala-AMP and then transferred to the acceptor end of tRNA(Ala). Also edits incorrectly charged Ser-tRNA(Ala) and Gly-tRNA(Ala) via its editing domain. This Acidithiobacillus ferridurans protein is Alanine--tRNA ligase.